A 364-amino-acid chain; its full sequence is DNA replication and repair protein RecF (364 aa).

An ATP-binding site is contributed by 33–40 (GENGSGKT).

The protein belongs to the RecF family.

Its subcellular location is the cytoplasm. Functionally, the RecF protein is involved in DNA metabolism; it is required for DNA replication and normal SOS inducibility. RecF binds preferentially to single-stranded, linear DNA. It also seems to bind ATP. The protein is DNA replication and repair protein RecF of Rickettsia felis (strain ATCC VR-1525 / URRWXCal2) (Rickettsia azadi).